The chain runs to 290 residues: Arginine and glutamate-rich protein 1 (290 aa).

The segment covering methionine 1–proline 10 has biased composition (polar residues). Disordered regions lie at residues methionine 1 to leucine 137, glutamate 193 to glutamate 216, and methionine 249 to leucine 290. Positions glycine 12–histidine 28 are enriched in basic residues. 2 stretches are compositionally biased toward basic and acidic residues: residues histidine 29 to serine 44 and arginine 53 to histidine 76. Phosphoserine is present on residues serine 77 and serine 79. The segment covering serine 88–glutamine 99 has biased composition (low complexity). Residues phenylalanine 111–lysine 269 are a coiled coil. The span at arginine 124–leucine 137 shows a compositional bias: basic and acidic residues. Basic and acidic residues predominate over residues methionine 249–lysine 269.

The protein belongs to the ARGLU1 family. In terms of assembly, associates with the U1-snRNP complex; the interaction is enhanced by binding of Arglu1 to a stable intronic sequence RNA (sisRNA) produced from the Arglu1 gene by premature cleavage.

It is found in the nucleus. Its subcellular location is the nucleus speckle. In terms of biological role, post-transcriptional regulator of gene expression; modulates splicing and premature cleavage at cryptic polyadenylation sites of its own pre-mRNA through binding and regulation of the U1-snRNP complex. This is Arginine and glutamate-rich protein 1 from Drosophila melanogaster (Fruit fly).